Here is a 334-residue protein sequence, read N- to C-terminus: Probable tRNA pseudouridine synthase B (334 aa).

Residue aspartate 82 is the Nucleophile of the active site. In terms of domain architecture, PUA spans leucine 250 to methionine 325.

It belongs to the pseudouridine synthase TruB family. Type 2 subfamily.

It catalyses the reaction uridine(55) in tRNA = pseudouridine(55) in tRNA. Its function is as follows. Could be responsible for synthesis of pseudouridine from uracil-55 in the psi GC loop of transfer RNAs. In Pyrococcus horikoshii (strain ATCC 700860 / DSM 12428 / JCM 9974 / NBRC 100139 / OT-3), this protein is Probable tRNA pseudouridine synthase B.